Here is a 274-residue protein sequence, read N- to C-terminus: Penicillin-insensitive murein endopeptidase (274 aa).

The signal sequence occupies residues 1–19 (MNKTAIALLALLASSASLA). 3 disulfide bridges follow: cysteine 44–cysteine 265, cysteine 187–cysteine 235, and cysteine 216–cysteine 223. 6 residues coordinate Zn(2+): histidine 110, histidine 113, aspartate 120, aspartate 147, histidine 150, and histidine 211. Residues 227–274 (PLPPPGDGCGAELQSWFEPPKPGTTKPEKKTPPPLPPSCQALLDEHVI) form a disordered region.

Belongs to the peptidase M74 family. As to quaternary structure, dimer. The cofactor is Zn(2+).

It is found in the periplasm. Its function is as follows. Murein endopeptidase that cleaves the D-alanyl-meso-2,6-diamino-pimelyl amide bond that connects peptidoglycan strands. Likely plays a role in the removal of murein from the sacculus. This Escherichia coli (strain SE11) protein is Penicillin-insensitive murein endopeptidase.